The following is a 2179-amino-acid chain: FRAS1-related extracellular matrix protein 1 (2179 aa).

An N-terminal signal peptide occupies residues 1–21 (MNSLSWGAANAVLLLLLLAWA). Positions 199–201 (RGD) match the Cell attachment site motif. 3 CSPG repeats span residues 296–390 (KAAF…LEVY), 413–500 (APRV…FRIF), and 521–615 (PPFL…FVLW). N335 carries an N-linked (GlcNAc...) asparagine glycan. N-linked (GlcNAc...) asparagine glycans are attached at residues N560 and N622. 3 CSPG repeats span residues 642 to 754 (KEAP…FSVS), 776 to 867 (QVPE…LEVT), and 887 to 982 (EPPV…LVVS). N1014 carries an N-linked (GlcNAc...) asparagine glycan. CSPG repeat units follow at residues 1024–1126 (PPSI…VYVT), 1147–1254 (EAPD…IQLS), 1275–1372 (KPML…FYLW), 1393–1485 (GDIV…FIIS), 1506–1596 (LPVV…FMAT), and 1628–1724 (PRIT…FQIM). N1566 is a glycosylation site (N-linked (GlcNAc...) asparagine). A Calx-beta domain is found at 1731–1830 (ATPQILELKW…DDEVFEVILN (100 aa)). Positions 1907-1909 (RGD) match the Cell attachment site motif. One can recognise a C-type lectin domain in the interval 2060 to 2174 (HSGYCHILIT…CRRAKPHNYV (115 aa)). Residues C2151 and C2165 are joined by a disulfide bond.

The protein belongs to the FRAS1 family. Interacts with FREM2.

The protein localises to the secreted. It localises to the extracellular space. Its subcellular location is the extracellular matrix. It is found in the basement membrane. Its function is as follows. Extracellular matrix protein that plays a role in epidermal differentiation and is required for epidermal adhesion during embryonic development. The sequence is that of FRAS1-related extracellular matrix protein 1 from Homo sapiens (Human).